Consider the following 240-residue polypeptide: Enolase-phosphatase E1 (240 aa).

Mg(2+) is bound by residues aspartate 9 and glutamate 11. Substrate-binding positions include 129–130 (SS) and lysine 168. Position 195 (aspartate 195) interacts with Mg(2+).

Belongs to the HAD-like hydrolase superfamily. MasA/MtnC family. In terms of assembly, monomer. Requires Mg(2+) as cofactor.

The protein localises to the cytoplasm. It localises to the nucleus. It carries out the reaction 5-methylsulfanyl-2,3-dioxopentyl phosphate + H2O = 1,2-dihydroxy-5-(methylsulfanyl)pent-1-en-3-one + phosphate. The protein operates within amino-acid biosynthesis; L-methionine biosynthesis via salvage pathway; L-methionine from S-methyl-5-thio-alpha-D-ribose 1-phosphate: step 3/6. It functions in the pathway amino-acid biosynthesis; L-methionine biosynthesis via salvage pathway; L-methionine from S-methyl-5-thio-alpha-D-ribose 1-phosphate: step 4/6. Functionally, bifunctional enzyme that catalyzes the enolization of 2,3-diketo-5-methylthiopentyl-1-phosphate (DK-MTP-1-P) into the intermediate 2-hydroxy-3-keto-5-methylthiopentenyl-1-phosphate (HK-MTPenyl-1-P), which is then dephosphorylated to form the acireductone 1,2-dihydroxy-3-keto-5-methylthiopentene (DHK-MTPene). The sequence is that of Enolase-phosphatase E1 from Candida tropicalis (strain ATCC MYA-3404 / T1) (Yeast).